We begin with the raw amino-acid sequence, 136 residues long: ATP synthase epsilon chain (136 aa).

A disordered region spans residues 88–136 (DASSAESDLQAARNEVSKMEGQPASADKVKAQQSLDRARARVQAAKNQD).

It belongs to the ATPase epsilon chain family. In terms of assembly, F-type ATPases have 2 components, CF(1) - the catalytic core - and CF(0) - the membrane proton channel. CF(1) has five subunits: alpha(3), beta(3), gamma(1), delta(1), epsilon(1). CF(0) has three main subunits: a, b and c.

Its subcellular location is the cellular thylakoid membrane. Functionally, produces ATP from ADP in the presence of a proton gradient across the membrane. The chain is ATP synthase epsilon chain from Synechococcus sp. (strain WH7803).